The sequence spans 150 residues: uncharacterized protein (150 aa).

The region spanning 3–145 is the Flavodoxin-like domain; the sequence is VAILSGSVYG…DAEPWLAEFA (143 aa).

It belongs to the flavodoxin family. MioC subfamily. FMN serves as cofactor.

Its function is as follows. Probable electron transporter. This is an uncharacterized protein from Pseudomonas aeruginosa (strain ATCC 15692 / DSM 22644 / CIP 104116 / JCM 14847 / LMG 12228 / 1C / PRS 101 / PAO1).